A 209-amino-acid chain; its full sequence is Large ribosomal subunit protein uL3 (209 aa).

The disordered stretch occupies residues 127–147 (YSRGPMGHGSKSHRVAGARSA).

It belongs to the universal ribosomal protein uL3 family. As to quaternary structure, part of the 50S ribosomal subunit. Forms a cluster with proteins L14 and L19.

Its function is as follows. One of the primary rRNA binding proteins, it binds directly near the 3'-end of the 23S rRNA, where it nucleates assembly of the 50S subunit. The protein is Large ribosomal subunit protein uL3 of Finegoldia magna (strain ATCC 29328 / DSM 20472 / WAL 2508) (Peptostreptococcus magnus).